Consider the following 671-residue polypeptide: Beta-galactosidase 1 (671 aa).

The N-terminal stretch at 1 to 18 (MKLIVLIFFLLFINLNYC) is a signal peptide. The active-site Proton donor is the Glu200. Asn228 carries N-linked (GlcNAc...) asparagine glycosylation. Catalysis depends on Glu288, which acts as the Nucleophile. N-linked (GlcNAc...) asparagine glycans are attached at residues Asn321, Asn391, Asn400, Asn499, Asn509, Asn564, and Asn595.

Belongs to the glycosyl hydrolase 35 family.

The protein resides in the lysosome. The enzyme catalyses Hydrolysis of terminal non-reducing beta-D-galactose residues in beta-D-galactosides.. Cleaves beta-linked terminal galactosyl residues from gangliosides, glycoproteins, and glycosaminoglycans. This Dictyostelium discoideum (Social amoeba) protein is Beta-galactosidase 1 (glb1).